The sequence spans 292 residues: Acetylglutamate kinase (292 aa).

Substrate contacts are provided by residues 64-65 (GG), Arg86, and Asn190.

The protein belongs to the acetylglutamate kinase family. ArgB subfamily.

Its subcellular location is the cytoplasm. It catalyses the reaction N-acetyl-L-glutamate + ATP = N-acetyl-L-glutamyl 5-phosphate + ADP. It functions in the pathway amino-acid biosynthesis; L-arginine biosynthesis; N(2)-acetyl-L-ornithine from L-glutamate: step 2/4. Its function is as follows. Catalyzes the ATP-dependent phosphorylation of N-acetyl-L-glutamate. In Leptospira biflexa serovar Patoc (strain Patoc 1 / Ames), this protein is Acetylglutamate kinase.